The primary structure comprises 586 residues: Germ cell nuclear acidic protein (586 aa).

Disordered regions lie at residues 17-119 (GWDR…LSSE), 176-202 (KAKTVKTPKSVQKTKKPAPSLCNSPVF), 217-266 (TWRT…SSEE), and 279-318 (LGGRTSASPMPSAEPKPQRPCLSTPSATGRKTGSQVPVKD). The segment covering 65-76 (SGKENRSQEEHI) has biased composition (basic and acidic residues). The span at 94–107 (TPKSTFKQSASSAQ) shows a compositional bias: polar residues. Residues 176 to 191 (KAKTVKTPKSVQKTKK) show a composition bias toward basic residues. The span at 225–244 (PPSDEHQATSKDREETEKPR) shows a compositional bias: basic and acidic residues. The span at 299–313 (CLSTPSATGRKTGSQ) shows a compositional bias: polar residues. Residues 383–482 (KLYQLYNTSV…LYARKAMLAH (100 aa)) form the SprT-like domain.

This sequence belongs to the serine-aspartate repeat-containing protein (SDr) family.

The protein resides in the nucleus. Its subcellular location is the PML body. The protein localises to the chromosome. May play a role in DNA-protein cross-links (DPCs) clearance, ensuring the genomic stability by protecting germ cells and early embryos from various sources of damage. In Danio rerio (Zebrafish), this protein is Germ cell nuclear acidic protein (gcna).